Reading from the N-terminus, the 336-residue chain is Holliday junction branch migration complex subunit RuvB (336 aa).

Positions 1–11 (MDDDKLLSGDK) are enriched in basic and acidic residues. Residues 1–21 (MDDDKLLSGDKADDEEASLEK) are disordered. The segment at 1–184 (MDDDKLLSGD…FGIVEHMAYY (184 aa)) is large ATPase domain (RuvB-L). Residues Leu-23, Arg-24, Gly-65, Lys-68, Thr-69, Thr-70, 131–133 (EDF), Arg-174, Tyr-184, and Arg-221 each bind ATP. Position 69 (Thr-69) interacts with Mg(2+). The tract at residues 185–255 (EVADLEDIVK…IVARSLTYLR (71 aa)) is small ATPAse domain (RuvB-S). Residues 258-336 (DAGLDETDNK…HLGFPYPENK (79 aa)) form a head domain (RuvB-H) region. 2 residues coordinate DNA: Arg-313 and Arg-318.

Belongs to the RuvB family. Homohexamer. Forms an RuvA(8)-RuvB(12)-Holliday junction (HJ) complex. HJ DNA is sandwiched between 2 RuvA tetramers; dsDNA enters through RuvA and exits via RuvB. An RuvB hexamer assembles on each DNA strand where it exits the tetramer. Each RuvB hexamer is contacted by two RuvA subunits (via domain III) on 2 adjacent RuvB subunits; this complex drives branch migration. In the full resolvosome a probable DNA-RuvA(4)-RuvB(12)-RuvC(2) complex forms which resolves the HJ.

The protein localises to the cytoplasm. It carries out the reaction ATP + H2O = ADP + phosphate + H(+). Functionally, the RuvA-RuvB-RuvC complex processes Holliday junction (HJ) DNA during genetic recombination and DNA repair, while the RuvA-RuvB complex plays an important role in the rescue of blocked DNA replication forks via replication fork reversal (RFR). RuvA specifically binds to HJ cruciform DNA, conferring on it an open structure. The RuvB hexamer acts as an ATP-dependent pump, pulling dsDNA into and through the RuvAB complex. RuvB forms 2 homohexamers on either side of HJ DNA bound by 1 or 2 RuvA tetramers; 4 subunits per hexamer contact DNA at a time. Coordinated motions by a converter formed by DNA-disengaged RuvB subunits stimulates ATP hydrolysis and nucleotide exchange. Immobilization of the converter enables RuvB to convert the ATP-contained energy into a lever motion, pulling 2 nucleotides of DNA out of the RuvA tetramer per ATP hydrolyzed, thus driving DNA branch migration. The RuvB motors rotate together with the DNA substrate, which together with the progressing nucleotide cycle form the mechanistic basis for DNA recombination by continuous HJ branch migration. Branch migration allows RuvC to scan DNA until it finds its consensus sequence, where it cleaves and resolves cruciform DNA. This Lactiplantibacillus plantarum (strain ATCC BAA-793 / NCIMB 8826 / WCFS1) (Lactobacillus plantarum) protein is Holliday junction branch migration complex subunit RuvB.